Reading from the N-terminus, the 447-residue chain is ATP-dependent protease ATPase subunit HslU (447 aa).

ATP-binding positions include isoleucine 17, 59–64 (GVGKTE), aspartate 256, glutamate 321, and arginine 393.

Belongs to the ClpX chaperone family. HslU subfamily. As to quaternary structure, a double ring-shaped homohexamer of HslV is capped on each side by a ring-shaped HslU homohexamer. The assembly of the HslU/HslV complex is dependent on binding of ATP.

The protein resides in the cytoplasm. ATPase subunit of a proteasome-like degradation complex; this subunit has chaperone activity. The binding of ATP and its subsequent hydrolysis by HslU are essential for unfolding of protein substrates subsequently hydrolyzed by HslV. HslU recognizes the N-terminal part of its protein substrates and unfolds these before they are guided to HslV for hydrolysis. The sequence is that of ATP-dependent protease ATPase subunit HslU from Pseudomonas putida (strain ATCC 47054 / DSM 6125 / CFBP 8728 / NCIMB 11950 / KT2440).